Reading from the N-terminus, the 868-residue chain is LPS-assembly protein LptD (868 aa).

A signal peptide spans 1–24 (MLKGIHKYLLMCFGTVLFTVQANA).

This sequence belongs to the LptD family. As to quaternary structure, component of the lipopolysaccharide transport and assembly complex. Interacts with LptE and LptA.

The protein localises to the cell outer membrane. Its function is as follows. Together with LptE, is involved in the assembly of lipopolysaccharide (LPS) at the surface of the outer membrane. The protein is LPS-assembly protein LptD of Francisella tularensis subsp. holarctica (strain LVS).